Consider the following 158-residue polypeptide: SsrA-binding protein (158 aa).

The protein belongs to the SmpB family.

It is found in the cytoplasm. Functionally, required for rescue of stalled ribosomes mediated by trans-translation. Binds to transfer-messenger RNA (tmRNA), required for stable association of tmRNA with ribosomes. tmRNA and SmpB together mimic tRNA shape, replacing the anticodon stem-loop with SmpB. tmRNA is encoded by the ssrA gene; the 2 termini fold to resemble tRNA(Ala) and it encodes a 'tag peptide', a short internal open reading frame. During trans-translation Ala-aminoacylated tmRNA acts like a tRNA, entering the A-site of stalled ribosomes, displacing the stalled mRNA. The ribosome then switches to translate the ORF on the tmRNA; the nascent peptide is terminated with the 'tag peptide' encoded by the tmRNA and targeted for degradation. The ribosome is freed to recommence translation, which seems to be the essential function of trans-translation. In Caldanaerobacter subterraneus subsp. tengcongensis (strain DSM 15242 / JCM 11007 / NBRC 100824 / MB4) (Thermoanaerobacter tengcongensis), this protein is SsrA-binding protein.